The following is a 224-amino-acid chain: Thymidine kinase (224 aa).

Residues 19-26 (GPMFAGKT) and 93-96 (DEVQ) contribute to the ATP site. E94 (proton acceptor) is an active-site residue. Zn(2+)-binding residues include C150, C153, C188, and H191.

It belongs to the thymidine kinase family. As to quaternary structure, homotetramer.

Its subcellular location is the cytoplasm. The enzyme catalyses thymidine + ATP = dTMP + ADP + H(+). This is Thymidine kinase from Mycoplasmoides gallisepticum (strain R(low / passage 15 / clone 2)) (Mycoplasma gallisepticum).